The primary structure comprises 189 residues: Fucolectin-5 (189 aa).

An N-terminal signal peptide occupies residues 1–31 (MKTCNLTDRMKVKMIMLLFQILAISTLQSDS). Residues 40 to 189 (QENVAVRGKA…VEVNALLPAN (150 aa)) are F5/8 type C-like. Residues D70, N72, and S81 each contribute to the Ca(2+) site. Disulfide bonds link C82-C178, C114-C115, and C140-C156. Residues H84 and R111 each coordinate alpha-L-fucose. Residues 111-113 (RGD) carry the Cell attachment site motif. R118 provides a ligand contact to alpha-L-fucose. C178 and E179 together coordinate Ca(2+).

Belongs to the fucolectin family. Homotrimer. Gill mucous cells.

It localises to the secreted. Its function is as follows. Acts as a defensive agent. Recognizes blood group fucosylated oligosaccharides including A, B, H and Lewis B-type antigens. Does not recognize Lewis A antigen and has low affinity for monovalent haptens. This Anguilla japonica (Japanese eel) protein is Fucolectin-5.